We begin with the raw amino-acid sequence, 213 residues long: FMN-dependent NADH:quinone oxidoreductase 3 (213 aa).

FMN-binding positions include Ser-10, Ser-16–Ser-18, and Met-96–Phe-99.

Belongs to the azoreductase type 1 family. In terms of assembly, homodimer. Requires FMN as cofactor.

It carries out the reaction 2 a quinone + NADH + H(+) = 2 a 1,4-benzosemiquinone + NAD(+). The enzyme catalyses N,N-dimethyl-1,4-phenylenediamine + anthranilate + 2 NAD(+) = 2-(4-dimethylaminophenyl)diazenylbenzoate + 2 NADH + 2 H(+). In terms of biological role, quinone reductase that provides resistance to thiol-specific stress caused by electrophilic quinones. Shows a preference for naphthoquinones such as plumbagin. Functionally, also exhibits azoreductase activity. Catalyzes the reductive cleavage of the azo bond in aromatic azo compounds to the corresponding amines. Preferred substrates are methyl red, amaranth and p-aminoazobenzene sulfonamide (PAABSA). The sequence is that of FMN-dependent NADH:quinone oxidoreductase 3 from Pseudomonas aeruginosa (strain ATCC 15692 / DSM 22644 / CIP 104116 / JCM 14847 / LMG 12228 / 1C / PRS 101 / PAO1).